The chain runs to 514 residues: MMVSWSVCRSSLALPACGLPSARHNSSMPVVRQALSPDNSSTVQNFSEIPGLWRNGLANLYSFWKLDGFRNIHRVMVHNFNTFGPIYREKIGYYDSVNIIKPEMPAILFKAEGHYPKRLTVEAWTSYRDYRNRKYGVLLKNGEDWRSNRVILNREVISPKVLGNFVPLLDEVGQDFVARVHKKIERSGQDKWTTDLSQELFKYALESVGSVLYGERLGLMLDYINPEAQHFIDCISLMFKTTSPMLYIPPAMLRRVGAKIWRDHVEAWDGIFNQADRCIQNIYRTMRQDTNTHGKYPGVLASLLMLDKLSIEDIKASVTELMAGGVDTTSITLLWTLYELARHPDLQEELRAEVAVARQSTQGDMLQMLKMIPLVKGALKETLRLHPVAVSLQRYITEEIVIQNYHIPCGTLVQLGLYAMGRDPDVFPRPEKYLPSRWLRTENQYFRSLGFGFGPRQCLGRRIAETEMQLFLIHMLENFRVDKQRQVEVHSTFELILLPEKPILLTLKPLKSGQ.

Residues 1 to 39 constitute a mitochondrion transit peptide; that stretch reads MMVSWSVCRSSLALPACGLPSARHNSSMPVVRQALSPDN. C458 serves as a coordination point for heme.

Belongs to the cytochrome P450 family. Heme serves as cofactor. In terms of tissue distribution, in the ovary, not found in early vitellogenic follicles, barely detected in postvitellogenic follicles and abundant in post-ovulatory follicles.

It localises to the mitochondrion inner membrane. The enzyme catalyses 6 reduced [adrenodoxin] + cholesterol + 3 O2 + 6 H(+) = 4-methylpentanal + pregnenolone + 6 oxidized [adrenodoxin] + 4 H2O. The protein operates within lipid metabolism; C21-steroid hormone metabolism. Its function is as follows. Catalyzes the side-chain cleavage reaction of cholesterol to pregnenolone, the precursor of most steroid hormones. The sequence is that of Cholesterol side-chain cleavage enzyme, mitochondrial (cyp11a1) from Oncorhynchus mykiss (Rainbow trout).